We begin with the raw amino-acid sequence, 398 residues long: Acetate kinase (398 aa).

A Mg(2+)-binding site is contributed by N7. An ATP-binding site is contributed by K14. Residue R91 participates in substrate binding. D148 (proton donor/acceptor) is an active-site residue. ATP contacts are provided by residues 208-212, 283-285, and 331-335; these read HLGNG, DSR, and GIGEN. E384 is a Mg(2+) binding site.

It belongs to the acetokinase family. Homodimer. The cofactor is Mg(2+). It depends on Mn(2+) as a cofactor.

The protein localises to the cytoplasm. The enzyme catalyses acetate + ATP = acetyl phosphate + ADP. Its pathway is metabolic intermediate biosynthesis; acetyl-CoA biosynthesis; acetyl-CoA from acetate: step 1/2. Catalyzes the formation of acetyl phosphate from acetate and ATP. Can also catalyze the reverse reaction. This Halothermothrix orenii (strain H 168 / OCM 544 / DSM 9562) protein is Acetate kinase.